The chain runs to 409 residues: MKSATIIGGGSHPELLHLISNRLGITPCDVSLKRFANGETSVEIRESVRDKDVFILQSGSSTVNDSLMELLIIISACKGGSAKRITAVMPYFPYSKQSKMRKYRDAITARMVANLLTVAGVDHIITLDLHASQMQGFFTRPVDNLYAEPNIAEWIRRNVDDWEEAVVVSKNPGGAKRVTSLADTLNLDFALINTDRQRSSHFSQNFEDSIMDETEATETHVTNCSVYLDRPRIHTAKYLLGHIIDDEEIITTPASVCSEDYAQEVNLYSQGGCPSDDDEEENIMSASIYAERMITLVGDVNGKTALLIDDTIENPTAFIVASEHLVKRCGAKRVIVIGTHGIFQNKCLKDLQSCEYIEQIVVTNTYPIKPQAVLECDKLTVIDISGVLAEAIRRTHNGESISFLFKKAF.

Mg(2+) is bound by residues D128, H130, and D143. S199 bears the Phosphoserine mark.

It belongs to the ribose-phosphate pyrophosphokinase family.

The protein resides in the cytoplasm. It carries out the reaction D-ribose 5-phosphate + ATP = 5-phospho-alpha-D-ribose 1-diphosphate + AMP + H(+). It participates in metabolic intermediate biosynthesis; 5-phospho-alpha-D-ribose 1-diphosphate biosynthesis; 5-phospho-alpha-D-ribose 1-diphosphate from D-ribose 5-phosphate (route I): step 1/1. 5-phosphoribose 1-diphosphate synthase involved in nucleotide, histidine, and tryptophan biosynthesis. Active in heteromultimeric complexes with other 5-phosphoribose 1-diphosphate synthases. The sequence is that of Ribose-phosphate pyrophosphokinase 1 from Schizosaccharomyces pombe (strain 972 / ATCC 24843) (Fission yeast).